Reading from the N-terminus, the 392-residue chain is 8-amino-7-oxononanoate synthase (392 aa).

Position 18 (Arg18) interacts with substrate. 105 to 106 (GY) lines the pyridoxal 5'-phosphate pocket. His130 contacts substrate. Pyridoxal 5'-phosphate contacts are provided by Ser177, His205, and Thr234. Residue Lys237 is modified to N6-(pyridoxal phosphate)lysine. Substrate is bound at residue Thr351.

This sequence belongs to the class-II pyridoxal-phosphate-dependent aminotransferase family. BioF subfamily. As to quaternary structure, homodimer. Pyridoxal 5'-phosphate serves as cofactor.

It catalyses the reaction 6-carboxyhexanoyl-[ACP] + L-alanine + H(+) = (8S)-8-amino-7-oxononanoate + holo-[ACP] + CO2. It functions in the pathway cofactor biosynthesis; biotin biosynthesis. Functionally, catalyzes the decarboxylative condensation of pimeloyl-[acyl-carrier protein] and L-alanine to produce 8-amino-7-oxononanoate (AON), [acyl-carrier protein], and carbon dioxide. In Thioalkalivibrio sulfidiphilus (strain HL-EbGR7), this protein is 8-amino-7-oxononanoate synthase.